The primary structure comprises 106 residues: MTSATQFDNVSVVKRANVYFDGKCVSHTVLFPDGTRKTLGVILPCALNFGTDAPELMEVQAGKCRVKLAGSSEWQTYGAGESFSVPGNSRFDIEVLDTLDYVCSYL.

This sequence belongs to the nucleoside phosphorylase PpnP family.

The catalysed reaction is a purine D-ribonucleoside + phosphate = a purine nucleobase + alpha-D-ribose 1-phosphate. It catalyses the reaction adenosine + phosphate = alpha-D-ribose 1-phosphate + adenine. The enzyme catalyses cytidine + phosphate = cytosine + alpha-D-ribose 1-phosphate. It carries out the reaction guanosine + phosphate = alpha-D-ribose 1-phosphate + guanine. The catalysed reaction is inosine + phosphate = alpha-D-ribose 1-phosphate + hypoxanthine. It catalyses the reaction thymidine + phosphate = 2-deoxy-alpha-D-ribose 1-phosphate + thymine. The enzyme catalyses uridine + phosphate = alpha-D-ribose 1-phosphate + uracil. It carries out the reaction xanthosine + phosphate = alpha-D-ribose 1-phosphate + xanthine. In terms of biological role, catalyzes the phosphorolysis of diverse nucleosides, yielding D-ribose 1-phosphate and the respective free bases. Can use uridine, adenosine, guanosine, cytidine, thymidine, inosine and xanthosine as substrates. Also catalyzes the reverse reactions. This is Pyrimidine/purine nucleoside phosphorylase from Burkholderia vietnamiensis (strain G4 / LMG 22486) (Burkholderia cepacia (strain R1808)).